The chain runs to 411 residues: Tyrosine--tRNA ligase (411 aa).

Tyr-36 is a binding site for L-tyrosine. The 'HIGH' region signature appears at 41–50; sequence PTADSLHVGH. 2 residues coordinate L-tyrosine: Tyr-172 and Gln-176. The 'KMSKS' region signature appears at 232–236; it reads KMGKT. Lys-235 provides a ligand contact to ATP. Positions 344 to 409 constitute an S4 RNA-binding domain; it reads YSIANILVVT…GKKNHIKVII (66 aa).

The protein belongs to the class-I aminoacyl-tRNA synthetase family. TyrS type 1 subfamily. In terms of assembly, homodimer.

It is found in the cytoplasm. It carries out the reaction tRNA(Tyr) + L-tyrosine + ATP = L-tyrosyl-tRNA(Tyr) + AMP + diphosphate + H(+). Functionally, catalyzes the attachment of tyrosine to tRNA(Tyr) in a two-step reaction: tyrosine is first activated by ATP to form Tyr-AMP and then transferred to the acceptor end of tRNA(Tyr). The protein is Tyrosine--tRNA ligase of Malacoplasma penetrans (strain HF-2) (Mycoplasma penetrans).